A 448-amino-acid chain; its full sequence is Histidinol dehydrogenase (448 aa).

Residues Tyr136, Gln197, and Asn220 each coordinate NAD(+). Substrate-binding residues include Ser243, Gln265, and His268. Residues Gln265 and His268 each contribute to the Zn(2+) site. Residues Glu333 and His334 each act as proton acceptor in the active site. Residues His334, Asp367, Glu421, and His426 each contribute to the substrate site. A Zn(2+)-binding site is contributed by Asp367. Residue His426 coordinates Zn(2+).

It belongs to the histidinol dehydrogenase family. It depends on Zn(2+) as a cofactor.

The catalysed reaction is L-histidinol + 2 NAD(+) + H2O = L-histidine + 2 NADH + 3 H(+). It participates in amino-acid biosynthesis; L-histidine biosynthesis; L-histidine from 5-phospho-alpha-D-ribose 1-diphosphate: step 9/9. In terms of biological role, catalyzes the sequential NAD-dependent oxidations of L-histidinol to L-histidinaldehyde and then to L-histidine. This Pseudomonas savastanoi pv. phaseolicola (strain 1448A / Race 6) (Pseudomonas syringae pv. phaseolicola (strain 1448A / Race 6)) protein is Histidinol dehydrogenase.